The following is a 98-amino-acid chain: Conotoxin Di19A (98 aa).

The signal sequence occupies residues 1 to 19 (MSTLGILLPIALLLPLANP). A propeptide spanning residues 20–49 (AENGDGQAMPRTRNLRSLSFGRTLRRLEKR) is cleaved from the precursor. At Pro53 the chain carries 4-hydroxyproline. Glu63 is modified (4-carboxyglutamate). 4-hydroxyproline occurs at positions 68, 93, and 97.

Contains 5 disulfide bonds. Expressed by the venom duct.

It localises to the secreted. Its function is as follows. Injection of the synthetic peptide causes a hyperexcitable phenotype in mice greater than three weeks of age at lower doses, and lethargy at higher doses. This Conus distans (Distant cone) protein is Conotoxin Di19A.